Here is a 92-residue protein sequence, read N- to C-terminus: MSAPNPLLAEINKGADLKHTETQDKSAPKIGSDVHIKKNDHASLLSEVEQGAKLKHAETDDKSAPKINENTTIKPNNHSALLGEIKAKAADS.

2 disordered regions span residues 1-33 (MSAPNPLLAEINKGADLKHTETQDKSAPKIGSD) and 54-92 (LKHAETDDKSAPKINENTTIKPNNHSALLGEIKAKAADS). 2 WH2 domains span residues 3-20 (APNPLLAEINKGADLKHT) and 40-57 (DHASLLSEVEQGAKLKHA). Basic and acidic residues-rich tracts occupy residues 13–33 (KGADLKHTETQDKSAPKIGSD) and 54–64 (LKHAETDDKSA). A compositionally biased stretch (polar residues) spans 68–79 (NENTTIKPNNHS).

As to quaternary structure, monomer.

Functionally, is able to bind two actin monomers at high concentrations of G-actin. Inhibits actin polymerization by sequestering G-actin and stabilizing actin dimers. The sequence is that of Actobindin-A (abnA) from Dictyostelium discoideum (Social amoeba).